Here is a 388-residue protein sequence, read N- to C-terminus: Alanine racemase (388 aa).

The active-site Proton acceptor; specific for D-alanine is the K44. K44 is modified (N6-(pyridoxal phosphate)lysine). R142 contributes to the substrate binding site. Residue Y273 is the Proton acceptor; specific for L-alanine of the active site. M321 is a substrate binding site.

The protein belongs to the alanine racemase family. The cofactor is pyridoxal 5'-phosphate.

It catalyses the reaction L-alanine = D-alanine. It functions in the pathway amino-acid biosynthesis; D-alanine biosynthesis; D-alanine from L-alanine: step 1/1. Catalyzes the interconversion of L-alanine and D-alanine. May also act on other amino acids. The protein is Alanine racemase (alr) of Mycobacterium leprae (strain TN).